Consider the following 130-residue polypeptide: Small ribosomal subunit protein uS9 (130 aa).

It belongs to the universal ribosomal protein uS9 family.

The polypeptide is Small ribosomal subunit protein uS9 (Janthinobacterium sp. (strain Marseille) (Minibacterium massiliensis)).